The sequence spans 44 residues: U2-agatoxin-Ao1s (44 aa).

A propeptide spanning residues 1-9 (KKVYSFLKL) is cleaved from the precursor. Disulfide bonds link C12–C28, C19–C33, and C27–C43.

Belongs to the neurotoxin 01 (U2-agtx) family. As to expression, expressed by the venom gland.

The protein resides in the secreted. Functionally, insect active toxin causing rapid but reversible paralysis in crickets. No activity shown in mammals. Does not show effect on mammalian voltage-gated calcium channels. The chain is U2-agatoxin-Ao1s from Agelena orientalis (Funnel-web spider).